Here is a 461-residue protein sequence, read N- to C-terminus: Carbamoyl phosphate synthase arginine-specific small chain (461 aa).

Positions His-240–Asn-427 constitute a Glutamine amidotransferase type-1 domain. Cys-316 functions as the Nucleophile in the catalytic mechanism. Catalysis depends on residues His-400 and Glu-402.

Belongs to the CarA family. Heterodimer composed of 2 chains; the small (or glutamine) chain promotes the hydrolysis of glutamine to ammonia, which is used by the large (or ammonia) chain to synthesize carbamoyl phosphate.

Its subcellular location is the cytoplasm. The enzyme catalyses hydrogencarbonate + L-glutamine + 2 ATP + H2O = carbamoyl phosphate + L-glutamate + 2 ADP + phosphate + 2 H(+). It catalyses the reaction L-glutamine + H2O = L-glutamate + NH4(+). It participates in amino-acid biosynthesis; L-arginine biosynthesis; carbamoyl phosphate from bicarbonate: step 1/1. Functionally, small subunit of the arginine-specific carbamoyl phosphate synthase (CPSase). CPSase catalyzes the formation of carbamoyl phosphate from the ammonia moiety of glutamine, carbonate, and phosphate donated by ATP, constituting the first step of 2 biosynthetic pathways, one leading to arginine and/or urea and the other to pyrimidine nucleotides. The small subunit (glutamine amidotransferase) binds and cleaves glutamine to supply the large subunit with the substrate ammonia. The protein is Carbamoyl phosphate synthase arginine-specific small chain (CPA1) of Chaetomium globosum (strain ATCC 6205 / CBS 148.51 / DSM 1962 / NBRC 6347 / NRRL 1970) (Soil fungus).